The chain runs to 339 residues: Phenylalanine--tRNA ligase alpha subunit (339 aa).

E262 serves as a coordination point for Mg(2+).

It belongs to the class-II aminoacyl-tRNA synthetase family. Phe-tRNA synthetase alpha subunit type 1 subfamily. In terms of assembly, tetramer of two alpha and two beta subunits. Mg(2+) is required as a cofactor.

The protein resides in the cytoplasm. It catalyses the reaction tRNA(Phe) + L-phenylalanine + ATP = L-phenylalanyl-tRNA(Phe) + AMP + diphosphate + H(+). The protein is Phenylalanine--tRNA ligase alpha subunit of Neisseria gonorrhoeae (strain ATCC 700825 / FA 1090).